The sequence spans 149 residues: Oligosaccharyltransferase complex subunit ostc (149 aa).

The Cytoplasmic portion of the chain corresponds to 1 to 32 (MESLYRVPFTVLECPNLKLKKPSWLHMPSAMT). The helical transmembrane segment at 33–53 (VYAMVVVSYFLITGGIIYDVI) threads the bilayer. The Extracellular segment spans residues 54-83 (VEPPSVGSMTDEHGHQRPVAFLAYRVNGQY). Residues 84–104 (IMEGLASSFLFTMGGLGFIIL) form a helical membrane-spanning segment. The Cytoplasmic portion of the chain corresponds to 105-117 (DRSNAPNIPKLNR). The helical transmembrane segment at 118–138 (FLLLFIGFVCVLLSFFMARVF) threads the bilayer. At 139–149 (MRMKLPGYLMG) the chain is on the extracellular side.

Belongs to the OSTC family. Specific component of the STT3A-containing form of the oligosaccharyltransferase (OST) complex.

It localises to the membrane. It functions in the pathway protein modification; protein glycosylation. Specific component of the STT3A-containing form of the oligosaccharyl transferase (OST) complex that catalyzes the initial transfer of a defined glycan (Glc(3)Man(9)GlcNAc(2) in eukaryotes) from the lipid carrier dolichol-pyrophosphate to an asparagine residue within an Asn-X-Ser/Thr consensus motif in nascent polypeptide chains, the first step in protein N-glycosylation. N-glycosylation occurs cotranslationally and the complex associates with the Sec61 complex at the channel-forming translocon complex that mediates protein translocation across the endoplasmic reticulum (ER). All subunits are required for a maximal enzyme activity. This is Oligosaccharyltransferase complex subunit ostc from Xenopus tropicalis (Western clawed frog).